A 120-amino-acid chain; its full sequence is Dynein 11 kDa light chain, flagellar outer arm (120 aa).

This sequence belongs to the dynein light chain family. As to quaternary structure, consists of at least 3 heavy chains (alpha, beta and gamma), 2 intermediate chains and 8 light chains.

It is found in the cytoplasm. The protein resides in the cytoskeleton. Its subcellular location is the flagellum axoneme. The polypeptide is Dynein 11 kDa light chain, flagellar outer arm (Chlamydomonas reinhardtii (Chlamydomonas smithii)).